The primary structure comprises 20 residues: 7.2 kDa cytotoxin RVV-7 (20 aa).

As to quaternary structure, monomer. Homodimerizes during storage at 30 degrees Celsius (observed after 3 days). Expressed by the venom gland.

Its subcellular location is the secreted. It localises to the target cell membrane. In terms of biological role, this three-finger cytotoxin shows cytotoxicity and direct nephrotoxicity. The cytotoxicity has been observed on B16F10 melanoma cells (EC(50)=2.56 uM) and on kidney proximal tubular epithelium LLCPK1 cells (EC(50)=4.79 uM); it is due to necrotic cell death and not to apoptosis. Direct nephrotoxicity has been deduced from binding to LLCPK1 cell line and to kidney membranes. In addition, after intravenous injection into mice tail vein, the toxin principally accumulates in kidney, but only minimally in blood, liver and brain. The chain is 7.2 kDa cytotoxin RVV-7 from Daboia russelii (Russel's viper).